The primary structure comprises 509 residues: UDP-N-acetylmuramoyl-L-alanyl-D-glutamate--2,6-diaminopimelate ligase (509 aa).

Residue S32 coordinates UDP-N-acetyl-alpha-D-muramoyl-L-alanyl-D-glutamate. 117–123 is a binding site for ATP; sequence GTNGKTT. UDP-N-acetyl-alpha-D-muramoyl-L-alanyl-D-glutamate is bound by residues 159–160, S186, Q192, and R194; that span reads TT. An N6-carboxylysine modification is found at K226. Residues R401, 425–428, G476, and E480 contribute to the meso-2,6-diaminopimelate site; that span reads DNPR. Residues 425-428 carry the Meso-diaminopimelate recognition motif motif; that stretch reads DNPR.

Belongs to the MurCDEF family. MurE subfamily. Mg(2+) serves as cofactor. Carboxylation is probably crucial for Mg(2+) binding and, consequently, for the gamma-phosphate positioning of ATP.

The protein localises to the cytoplasm. The enzyme catalyses UDP-N-acetyl-alpha-D-muramoyl-L-alanyl-D-glutamate + meso-2,6-diaminopimelate + ATP = UDP-N-acetyl-alpha-D-muramoyl-L-alanyl-gamma-D-glutamyl-meso-2,6-diaminopimelate + ADP + phosphate + H(+). It functions in the pathway cell wall biogenesis; peptidoglycan biosynthesis. Catalyzes the addition of meso-diaminopimelic acid to the nucleotide precursor UDP-N-acetylmuramoyl-L-alanyl-D-glutamate (UMAG) in the biosynthesis of bacterial cell-wall peptidoglycan. This chain is UDP-N-acetylmuramoyl-L-alanyl-D-glutamate--2,6-diaminopimelate ligase, found in Prochlorococcus marinus (strain NATL1A).